The following is a 228-amino-acid chain: Cytochrome b-c1 complex subunit Rieske, mitochondrial (228 aa).

The N-terminal 26 residues, 1 to 26 (MLAKQFISKSLASSLRRLLPVSSTAS), are a transit peptide targeting the mitochondrion. Over 27-63 (SLKGSMMTIPKFTSIRTYTDSPEMPDFSEYQTKSTGD) the chain is Mitochondrial matrix. The helical transmembrane segment at 64–93 (RSRVISYAMVGTMGALTAAGAQATVHDFLA) threads the bilayer. Over 94–228 (SWSASADVLA…TFEGSKIIIG (135 aa)) the chain is Mitochondrial intermembrane. Residues 139–227 (IQEANSVDIS…YTFEGSKIII (89 aa)) form the Rieske domain. Positions 172, 174, 191, and 194 each coordinate [2Fe-2S] cluster. A disulfide bond links Cys177 and Cys193.

Belongs to the Rieske iron-sulfur protein family. As to quaternary structure, component of the ubiquinol-cytochrome c oxidoreductase (cytochrome b-c1 complex, complex III, CIII), a multisubunit enzyme composed of 3 respiratory subunits cytochrome b, cytochrome c1 and Rieske protein, 2 core protein subunits, and additional low-molecular weight protein subunits. The complex exists as an obligatory dimer and forms supercomplexes (SCs) in the inner mitochondrial membrane with cytochrome c oxidase (complex IV, CIV). [2Fe-2S] cluster serves as cofactor.

It is found in the mitochondrion inner membrane. It carries out the reaction a quinol + 2 Fe(III)-[cytochrome c](out) = a quinone + 2 Fe(II)-[cytochrome c](out) + 2 H(+)(out). Functionally, component of the ubiquinol-cytochrome c oxidoreductase, a multisubunit transmembrane complex that is part of the mitochondrial electron transport chain which drives oxidative phosphorylation. The respiratory chain contains 3 multisubunit complexes succinate dehydrogenase (complex II, CII), ubiquinol-cytochrome c oxidoreductase (cytochrome b-c1 complex, complex III, CIII) and cytochrome c oxidase (complex IV, CIV), that cooperate to transfer electrons derived from NADH and succinate to molecular oxygen, creating an electrochemical gradient over the inner membrane that drives transmembrane transport and the ATP synthase. The cytochrome b-c1 complex catalyzes electron transfer from ubiquinol to cytochrome c, linking this redox reaction to translocation of protons across the mitochondrial inner membrane, with protons being carried across the membrane as hydrogens on the quinol. In the process called Q cycle, 2 protons are consumed from the matrix, 4 protons are released into the intermembrane space and 2 electrons are passed to cytochrome c. The Rieske protein is a catalytic core subunit containing a [2Fe-2S] iron-sulfur cluster. It cycles between 2 conformational states during catalysis to transfer electrons from the quinol bound in the Q(0) site in cytochrome b to cytochrome c1. The protein is Cytochrome b-c1 complex subunit Rieske, mitochondrial (rip1) of Schizosaccharomyces pombe (strain 972 / ATCC 24843) (Fission yeast).